The primary structure comprises 577 residues: MNIQALLSEKVRQAMIAAGAPADCEPQVRQSAKVQFGDYQANGMMAVAKKLGMAPRQLAEQVLTHLDLNGIASKVEIAGPGFINIFLDPAFLAEHVQQALASDRLGVATPEKQTIVVDYSAPNVAKEMHVGHLRSTIIGDAAVRTLEFLGHKVIRANHVGDWGTQFGMLIAWLEKQQQENAGEMELADLEGFYRDAKKHYDEDEEFAERARNYVVKLQSGDEYFHEMWRKLVDITMTQNQITYDRLNVTLTRDDVMGESLYNPMLPGIVADLKAKGLAVESEGATVVFLDEFKNKEGEPMGVIIQKKDGGYLYTTTDIACAKYRYETLHADRVLYYIDSRQHQHLMQAWAIVRKAGYVPESVPLEHHMFGMMLGKDGKPFKTRAGGTVKLADLLDEALERARRLVAEKNPDMPADELEKLANAVGIGAVKYADLSKNRTTDYIFDWDNMLAFEGNTAPYMQYAYTRVLSVFRKAEINEEQLAAAPVIIREDREAQLAARLLQFEETLTVVAREGTPHVMCAYLYDLAGLFSGFYEHCPILSAENEEVRNSRLKLAQLTAKTLKLGLDTLGIETVERM.

The 'HIGH' region signature appears at 122 to 132; the sequence is PNVAKEMHVGH.

The protein belongs to the class-I aminoacyl-tRNA synthetase family. Monomer.

Its subcellular location is the cytoplasm. It catalyses the reaction tRNA(Arg) + L-arginine + ATP = L-arginyl-tRNA(Arg) + AMP + diphosphate. The chain is Arginine--tRNA ligase from Escherichia coli O81 (strain ED1a).